Reading from the N-terminus, the 110-residue chain is Large ribosomal subunit protein uL22 (110 aa).

This sequence belongs to the universal ribosomal protein uL22 family. As to quaternary structure, part of the 50S ribosomal subunit.

Its function is as follows. This protein binds specifically to 23S rRNA; its binding is stimulated by other ribosomal proteins, e.g. L4, L17, and L20. It is important during the early stages of 50S assembly. It makes multiple contacts with different domains of the 23S rRNA in the assembled 50S subunit and ribosome. In terms of biological role, the globular domain of the protein is located near the polypeptide exit tunnel on the outside of the subunit, while an extended beta-hairpin is found that lines the wall of the exit tunnel in the center of the 70S ribosome. This chain is Large ribosomal subunit protein uL22, found in Marinobacter nauticus (strain ATCC 700491 / DSM 11845 / VT8) (Marinobacter aquaeolei).